The primary structure comprises 110 residues: Large ribosomal subunit protein uL22 (110 aa).

This sequence belongs to the universal ribosomal protein uL22 family. Part of the 50S ribosomal subunit.

This protein binds specifically to 23S rRNA; its binding is stimulated by other ribosomal proteins, e.g. L4, L17, and L20. It is important during the early stages of 50S assembly. It makes multiple contacts with different domains of the 23S rRNA in the assembled 50S subunit and ribosome. Functionally, the globular domain of the protein is located near the polypeptide exit tunnel on the outside of the subunit, while an extended beta-hairpin is found that lines the wall of the exit tunnel in the center of the 70S ribosome. The polypeptide is Large ribosomal subunit protein uL22 (Actinobacillus pleuropneumoniae serotype 5b (strain L20)).